The primary structure comprises 310 residues: Homoserine kinase (310 aa).

95–105 (PQSRGLGSSAA) is an ATP binding site.

It belongs to the GHMP kinase family. Homoserine kinase subfamily.

The protein resides in the cytoplasm. The catalysed reaction is L-homoserine + ATP = O-phospho-L-homoserine + ADP + H(+). The protein operates within amino-acid biosynthesis; L-threonine biosynthesis; L-threonine from L-aspartate: step 4/5. In terms of biological role, catalyzes the ATP-dependent phosphorylation of L-homoserine to L-homoserine phosphate. The chain is Homoserine kinase from Corynebacterium kroppenstedtii (strain DSM 44385 / JCM 11950 / CIP 105744 / CCUG 35717).